Reading from the N-terminus, the 553-residue chain is MVDMGALDNLIANTAYLQARKPSDCDSKELQRRRRSLALPGLQGCAELRQKLSLNFHSLCEQQPIGRRLFRDFLATVPTFRKAATFLEDVQNWELAEEGPTKDSALQGLVATCASAPAPGNPQPFLSQAVATKCQAATTEEERVAAVTLAKAEAMAFLQEQPFKDFVTSAFYDKFLQWKLFEMQPVSDKYFTEFRVLGKGGFGEVCAVQVKNTGKMYACKKLDKKRLKKKGGEKMALLEKEILEKVSSPFIVSLAYAFESKTHLCLVMSLMNGGDLKFHIYNVGTRGLDMSRVIFYSAQIACGMLHLHELGIVYRDMKPENVLLDDLGNCRLSDLGLAVEMKGGKPITQRAGTNGYMAPEILMEKVSYSYPVDWFAMGCSIYEMVAGRTPFKDYKEKVSKEDLKQRTLQDEVKFQHDNFTEEAKDICRLFLAKKPEQRLGSREKSDDPRKHHFFKTINFPRLEAGLIEPPFVPDPSVVYAKDIAEIDDFSEVRGVEFDDKDKQFFKNFATGAVPIAWQEEIIETGLFEELNDPNRPTGCEEGNSSKSGVCLLL.

Ser-36 carries the post-translational modification Phosphoserine; by PKA. The 121-residue stretch at Phe-56–Leu-176 folds into the RGS domain. The Protein kinase domain occupies Phe-191–Phe-454. Residues Leu-197–Val-205 and Lys-220 each bind ATP. Residue Asp-316 is the Proton acceptor of the active site. Positions Lys-455 to Glu-520 constitute an AGC-kinase C-terminal domain. Cysteine methyl ester is present on Cys-550. Residue Cys-550 is the site of S-geranylgeranyl cysteine attachment. Residues Leu-551 to Leu-553 constitute a propeptide, removed in mature form.

The protein belongs to the protein kinase superfamily. AGC Ser/Thr protein kinase family. GPRK subfamily. As to quaternary structure, interacts (when prenylated) with PDE6D; this promotes release from membranes. Post-translationally, autophosphorylated in vitro at Ser-490. Phosphorylation at Ser-36 is regulated by light and activated by cAMP. Retinal cones, outer and inner segments.

Its subcellular location is the membrane. It carries out the reaction L-threonyl-[rhodopsin] + ATP = O-phospho-L-threonyl-[rhodopsin] + ADP + H(+). It catalyses the reaction L-seryl-[rhodopsin] + ATP = O-phospho-L-seryl-[rhodopsin] + ADP + H(+). Its activity is regulated as follows. Inhibited by phosphorylation of Ser-36. In terms of biological role, retina-specific kinase involved in the shutoff of the photoresponse and adaptation to changing light conditions via cone opsin phosphorylation, including rhodopsin (RHO). This is Rhodopsin kinase GRK7 (GRK7) from Homo sapiens (Human).